Consider the following 195-residue polypeptide: Inner membrane-spanning protein YciB (195 aa).

The next 5 membrane-spanning stretches (helical) occupy residues 34 to 54 (IYGA…ALWL), 65 to 85 (FTLG…EDTF), 88 to 108 (WKAP…HFIG), 131 to 151 (LNIA…YVVF), and 160 to 180 (FKVF…GLFL).

Belongs to the YciB family.

It localises to the cell inner membrane. Plays a role in cell envelope biogenesis, maintenance of cell envelope integrity and membrane homeostasis. The sequence is that of Inner membrane-spanning protein YciB from Pseudomonas aeruginosa (strain LESB58).